We begin with the raw amino-acid sequence, 261 residues long: ATP synthase subunit a (261 aa).

The next 7 helical transmembrane spans lie at 31 to 51 (IAFTNSAMWMVVTLAALLIFM), 64 to 84 (WQAAVESFTGFVAGMMATNIG), 97 to 117 (LFMFILIANIMGMMPTGVVGV), 126 to 146 (LTVTGVLAVISFSIVLVVGFW), 166 to 188 (IPMIFVIELFSFLIRPFSLGLRL), 201 to 223 (VLAGFVINGINAGALTVAIVSIP), and 235 to 255 (ELLVCAIQAYVFALLTSLYLN).

It belongs to the ATPase A chain family. In terms of assembly, F-type ATPases have 2 components, CF(1) - the catalytic core - and CF(0) - the membrane proton channel. CF(1) has five subunits: alpha(3), beta(3), gamma(1), delta(1), epsilon(1). CF(0) has three main subunits: a(1), b(2) and c(9-12). The alpha and beta chains form an alternating ring which encloses part of the gamma chain. CF(1) is attached to CF(0) by a central stalk formed by the gamma and epsilon chains, while a peripheral stalk is formed by the delta and b chains.

The protein resides in the cell inner membrane. Key component of the proton channel; it plays a direct role in the translocation of protons across the membrane. This is ATP synthase subunit a from Rhizorhabdus wittichii (strain DSM 6014 / CCUG 31198 / JCM 15750 / NBRC 105917 / EY 4224 / RW1) (Sphingomonas wittichii).